Here is a 269-residue protein sequence, read N- to C-terminus: 4-hydroxy-tetrahydrodipicolinate reductase (269 aa).

NAD(+) contacts are provided by residues 8-13 and glutamate 34; that span reads GAAGRM. Arginine 35 serves as a coordination point for NADP(+). Residues 98–100 and 122–125 each bind NAD(+); these read GTT and APNY. The active-site Proton donor/acceptor is histidine 155. (S)-2,3,4,5-tetrahydrodipicolinate is bound at residue histidine 156. The active-site Proton donor is the lysine 159. 165–166 lines the (S)-2,3,4,5-tetrahydrodipicolinate pocket; it reads GT.

Belongs to the DapB family.

The protein resides in the cytoplasm. It catalyses the reaction (S)-2,3,4,5-tetrahydrodipicolinate + NAD(+) + H2O = (2S,4S)-4-hydroxy-2,3,4,5-tetrahydrodipicolinate + NADH + H(+). The catalysed reaction is (S)-2,3,4,5-tetrahydrodipicolinate + NADP(+) + H2O = (2S,4S)-4-hydroxy-2,3,4,5-tetrahydrodipicolinate + NADPH + H(+). It participates in amino-acid biosynthesis; L-lysine biosynthesis via DAP pathway; (S)-tetrahydrodipicolinate from L-aspartate: step 4/4. Functionally, catalyzes the conversion of 4-hydroxy-tetrahydrodipicolinate (HTPA) to tetrahydrodipicolinate. The protein is 4-hydroxy-tetrahydrodipicolinate reductase of Vibrio cholerae serotype O1 (strain ATCC 39541 / Classical Ogawa 395 / O395).